Consider the following 160-residue polypeptide: FMRFamide-like neuropeptides 13 (160 aa).

An N-terminal signal peptide occupies residues 1-17 (MMTSLLTISMFVVAIQA). The propeptide occupies 18-43 (FDSSEIRMLDEQYDTKNPFFQFLENS). 9 positions are modified to phenylalanine amide: F60, F73, F85, F98, F110, F123, F135, F146, and F157.

This sequence belongs to the FARP (FMRFamide related peptide) family. As to expression, expressed in the ASE sensory neurons, the DD motor neurons, the 15, M3 and M5 cholinergic pharyngeal motoneurons, and the ASG, ASK and BAG neurons.

Its subcellular location is the secreted. Its function is as follows. Probable FMRFamide-like neuropeptides. Binds to neuronal receptors such as dmsr-1 to promote sleep in response to cellular stress also known as stress-induced sleep (SIS). Plays a role in behaviors associated with SIS, acting in concert with the FMRFamide related peptide, flp-24 and neuropeptide-like protein nlp-8. In terms of biological role, AADGAPLIRF-amide: Inhibits muscle tension in somatic muscle. Acts as a ligand for the npr-22 receptor in vitro. Acts as a ligand for isoform a of the dmsr-1 G-protein coupled receptor in vitro. APEASPFIRF-amide: Inhibits muscle tension in somatic muscle. Potent inhibitor of the activity of the dissected pharyngeal myogenic muscle system. Acts as a ligand for isoform a of the dmsr-1 G-protein coupled receptor in vitro. Functionally, acts as a ligand for the npr-22 receptor in vitro. Acts as a ligand for isoform a of the dmsr-1 G-protein coupled receptor in vitro. Its function is as follows. Acts as a ligand for isoform a of the dmsr-1 G-protein coupled receptor in vitro. This Caenorhabditis elegans protein is FMRFamide-like neuropeptides 13.